The primary structure comprises 181 residues: Large ribosomal subunit protein uL5 (181 aa).

This sequence belongs to the universal ribosomal protein uL5 family. Part of the 50S ribosomal subunit; contacts the 5S rRNA and probably tRNA. Forms a bridge to the 30S subunit in the 70S ribosome.

In terms of biological role, this is one of the proteins that bind and probably mediate the attachment of the 5S RNA into the large ribosomal subunit, where it forms part of the central protuberance. In the 70S ribosome it contacts protein S13 of the 30S subunit (bridge B1b), connecting the 2 subunits; this bridge is implicated in subunit movement. May contact the P site tRNA; the 5S rRNA and some of its associated proteins might help stabilize positioning of ribosome-bound tRNAs. This chain is Large ribosomal subunit protein uL5, found in Methanococcus vannielii.